Here is a 328-residue protein sequence, read N- to C-terminus: Olfactory receptor 2AJ1 (328 aa).

The Extracellular portion of the chain corresponds to 1-25 (MGHQNHTFSSDFILLGLFSSSPTSV). An N-linked (GlcNAc...) asparagine glycan is attached at Asn5. A helical membrane pass occupies residues 26–49 (VFFLVLFVIFIMSVTENTLMILLI). At 50-57 (RSDSRLHT) the chain is on the cytoplasmic side. The chain crosses the membrane as a helical span at residues 58–79 (PMYFLLSHLSLMDILHVSNIVP). The Extracellular portion of the chain corresponds to 80–100 (KMVTNFLSGSRTISFAGCGFQ). An intrachain disulfide couples Cys97 to Cys189. Residues 101-120 (VFLSLTLLGGECLLLAAMSC) traverse the membrane as a helical segment. The Cytoplasmic portion of the chain corresponds to 121-139 (DRYVAICHPLRYPILMKEY). The helical transmembrane segment at 140–158 (ASALMAGGSWLIGVFNSTV) threads the bilayer. At 159-195 (HTAYALQFPFCGSRAIDHFFCEVPAMLKLSCADTTRY) the chain is on the extracellular side. The chain crosses the membrane as a helical span at residues 196 to 219 (ERGVCVSAVIFLLIPFSLISASYG). Residues 220–236 (QIILTVLQMKSSEARKK) are Cytoplasmic-facing. The helical transmembrane segment at 237 to 259 (SFSTCSFHMIVVTMYYGPFIFTY) threads the bilayer. Residues 260–272 (MRPKSYHTPGQDK) lie on the Extracellular side of the membrane. The chain crosses the membrane as a helical span at residues 273–292 (FLAIFYTILTPTLNPFIYSF). Over 293 to 328 (RNKDVLAVMKNMLKSNFLHKKMNRKIPECVFCLFLC) the chain is Cytoplasmic.

The protein belongs to the G-protein coupled receptor 1 family.

Its subcellular location is the cell membrane. Functionally, odorant receptor. In Homo sapiens (Human), this protein is Olfactory receptor 2AJ1 (OR2AJ1).